A 379-amino-acid chain; its full sequence is Putative phosphatidate phosphatase (379 aa).

Residues Met1–Ser53 are disordered. Residues Ser9 to Thr18 are compositionally biased toward polar residues. A compositionally biased stretch (basic and acidic residues) spans Pro19–Leu33. Low complexity predominate over residues Gln35–Ser53. Asn51 carries N-linked (GlcNAc...) asparagine glycosylation. 2 helical membrane passes run Val90–Leu110 and Met138–Ile158. An N-linked (GlcNAc...) asparagine glycan is attached at Asn169. The next 2 membrane-spanning stretches (helical) occupy residues Ser266–Leu286 and Ala330–Phe350.

Belongs to the PA-phosphatase related phosphoesterase family. As to quaternary structure, homodimer. This complex seems not to be involved in substrate recognition, it may confer only structural or functional stability. As to expression, expressed in embryonic gut in a pattern that guides germ cells towards mesoderm (initially in hindgut and then on lower side of gut). During extended germ band stage, expressed in ectoderm as a medial band throughout the trunk.

The protein resides in the membrane. It carries out the reaction a 1,2-diacyl-sn-glycero-3-phosphate + H2O = a 1,2-diacyl-sn-glycerol + phosphate. Responsible for guiding the germ cells early in the process of migration from the lumen of the developing gut towards the overlying mesoderm, where the germ cells enter the gonads. May be involved in lipid metabolism. This Drosophila melanogaster (Fruit fly) protein is Putative phosphatidate phosphatase (wun).